The primary structure comprises 316 residues: UPF0725 protein At1g02770 (316 aa).

Belongs to the UPF0725 (EMB2204) family.

In Arabidopsis thaliana (Mouse-ear cress), this protein is UPF0725 protein At1g02770.